The chain runs to 299 residues: tRNA pseudouridine synthase B (299 aa).

Asp-47 acts as the Nucleophile in catalysis.

This sequence belongs to the pseudouridine synthase TruB family. Type 1 subfamily.

The catalysed reaction is uridine(55) in tRNA = pseudouridine(55) in tRNA. Its function is as follows. Responsible for synthesis of pseudouridine from uracil-55 in the psi GC loop of transfer RNAs. In Dechloromonas aromatica (strain RCB), this protein is tRNA pseudouridine synthase B.